The primary structure comprises 666 residues: Protein-arginine deiminase type-4 (666 aa).

Residues Asn-153, Asp-155, Asp-165, Asp-168, Asp-176, and Asp-179 each coordinate Ca(2+). Citrulline occurs at positions 212 and 218. Position 349 (Gln-349) interacts with Ca(2+). Asp-350 is a catalytic residue. Ca(2+) is bound by residues Glu-351, Glu-353, Asp-369, and Ser-370. Citrulline is present on residues Arg-372, Arg-374, and Arg-383. Arg-374 lines the substrate pocket. Ca(2+)-binding residues include Phe-407, Leu-410, and Glu-411. Residues His-471, Asp-473, and Cys-648 contribute to the active site.

Belongs to the protein arginine deiminase family. The cofactor is Ca(2+). Post-translationally, autocitrullination at Arg-372 and Arg-374 inactivates the enzyme. As to expression, expressed in pluripotent embryonic stem and induced pluripotent stem cells but not multipotent neural stem cells.

The protein resides in the cytoplasm. The protein localises to the nucleus. It localises to the cytoplasmic granule. The catalysed reaction is L-arginyl-[protein] + H2O = L-citrullyl-[protein] + NH4(+). Its activity is regulated as follows. Strongly Inhibited by F-amidine and N-alpha-benzoyl-N5-(2-chloro-1-iminoethyl)-L-ornithine amide (Cl-amidine). These inhibitors are however not specific to PADI4 and also inhibit other members of the family. Its function is as follows. Catalyzes the citrullination/deimination of arginine residues of proteins such as histones, thereby playing a key role in histone code and regulation of stem cell maintenance. Citrullinates histone H1 at 'Arg-54' (to form H1R54ci), histone H3 at 'Arg-2', 'Arg-8', 'Arg-17' and/or 'Arg-26' (to form H3R2ci, H3R8ci, H3R17ci, H3R26ci, respectively) and histone H4 at 'Arg-3' (to form H4R3ci). Acts as a key regulator of stem cell maintenance by mediating citrullination of histone H1: citrullination of 'Arg-54' of histone H1 (H1R54ci) results in H1 displacement from chromatin and global chromatin decondensation, thereby promoting pluripotency and stem cell maintenance. Promotes profound chromatin decondensation during the innate immune response to infection in neutrophils by mediating formation of H1R54ci. Required for the formation of neutrophil extracellular traps (NETs); NETs are mainly composed of DNA fibers and are released by neutrophils to bind pathogens during inflammation. Citrullination of histone H3 prevents their methylation by CARM1 and HRMT1L2/PRMT1 and represses transcription. Citrullinates EP300/P300 at 'Arg-2142', which favors its interaction with NCOA2/GRIP1. The sequence is that of Protein-arginine deiminase type-4 (Padi4) from Mus musculus (Mouse).